The primary structure comprises 122 residues: Large ribosomal subunit protein bL12 (122 aa).

Belongs to the bacterial ribosomal protein bL12 family. As to quaternary structure, homodimer. Part of the ribosomal stalk of the 50S ribosomal subunit. Forms a multimeric L10(L12)X complex, where L10 forms an elongated spine to which 2 to 4 L12 dimers bind in a sequential fashion. Binds GTP-bound translation factors.

Its function is as follows. Forms part of the ribosomal stalk which helps the ribosome interact with GTP-bound translation factors. Is thus essential for accurate translation. This is Large ribosomal subunit protein bL12 from Mycoplasma capricolum subsp. capricolum (strain California kid / ATCC 27343 / NCTC 10154).